We begin with the raw amino-acid sequence, 238 residues long: RNA-binding protein pno1 (238 aa).

Residues 162-211 (QSRAIGRLAGKGGRTKFTIENVTKTRIVLADSKIHILGSYQNIQLARRAI) form the KH domain.

It belongs to the PNO1 family.

Its subcellular location is the nucleus. The protein resides in the nucleolus. This Drosophila pseudoobscura pseudoobscura (Fruit fly) protein is RNA-binding protein pno1 (l(1)G0004).